Consider the following 457-residue polypeptide: Serine--tRNA ligase (457 aa).

Position 252 to 254 (252 to 254 (TAE)) interacts with L-serine. ATP contacts are provided by residues 283–285 (RKE) and Val-299. Glu-306 is an L-serine binding site. ATP is bound at residue 370–373 (EMVS). Thr-406 provides a ligand contact to L-serine.

The protein belongs to the class-II aminoacyl-tRNA synthetase family. Type-1 seryl-tRNA synthetase subfamily. Homodimer. The tRNA molecule binds across the dimer.

Its subcellular location is the cytoplasm. The catalysed reaction is tRNA(Ser) + L-serine + ATP = L-seryl-tRNA(Ser) + AMP + diphosphate + H(+). The enzyme catalyses tRNA(Sec) + L-serine + ATP = L-seryl-tRNA(Sec) + AMP + diphosphate + H(+). Its pathway is aminoacyl-tRNA biosynthesis; selenocysteinyl-tRNA(Sec) biosynthesis; L-seryl-tRNA(Sec) from L-serine and tRNA(Sec): step 1/1. In terms of biological role, catalyzes the attachment of serine to tRNA(Ser). Is also able to aminoacylate tRNA(Sec) with serine, to form the misacylated tRNA L-seryl-tRNA(Sec), which will be further converted into selenocysteinyl-tRNA(Sec). The polypeptide is Serine--tRNA ligase (Saccharolobus solfataricus (strain ATCC 35092 / DSM 1617 / JCM 11322 / P2) (Sulfolobus solfataricus)).